A 409-amino-acid polypeptide reads, in one-letter code: Inactive serine protease 35 (409 aa).

A signal peptide spans 1–17 (MLLWLIFFTPGWTLIDG). N-linked (GlcNAc...) asparagine glycosylation is found at asparagine 87 and asparagine 107. One can recognise a Peptidase S1 domain in the interval 120–404 (VYGTDSRFSI…ICLWIHGNDA (285 aa)). A disulfide bond links cysteine 150 and cysteine 166. Basic residues predominate over residues 188–203 (RNKSGGKKRRGSKRSR). The segment at 188 to 246 (RNKSGGKKRRGSKRSRRETSGGDQREGPREHLQDRVKAGRRRKQSGGGQRVSEGRPSFR) is disordered. A compositionally biased stretch (basic and acidic residues) spans 204 to 224 (RETSGGDQREGPREHLQDRVK).

It belongs to the peptidase S1 family.

Its subcellular location is the secreted. In Macaca mulatta (Rhesus macaque), this protein is Inactive serine protease 35 (PRSS35).